A 659-amino-acid chain; its full sequence is Heparin-sulfate lyase (659 aa).

The first 24 residues, 1–24 (MTTKIFKRIIVFAVIALSSGNILA), serve as a signal peptide directing secretion. Tyr294 acts as the Proton acceptor in catalysis.

This sequence belongs to the polysaccharide lyase 12 family.

Its subcellular location is the periplasm. It catalyses the reaction Elimination of sulfate, appears to act on linkages between N-acetyl-D-glucosamine and uronate. Product is an unsaturated sugar.. Functionally, specifically cleaves heparan sulfate-rich regions of acidic polysaccharides. Does not act on N,O-desulfated glucosamine or N-acetyl-O-sulfated glucosamine linkages. Functions in cleaving metazoan heparan sulfate and providing carbon, nitrogen and sulfate sources for microorganisms. This Pedobacter heparinus (strain ATCC 13125 / DSM 2366 / CIP 104194 / JCM 7457 / NBRC 12017 / NCIMB 9290 / NRRL B-14731 / HIM 762-3) protein is Heparin-sulfate lyase (hepC).